Reading from the N-terminus, the 82-residue chain is MKKDIHPAYRPVVFYDASAEFKILTRSTVETKETIQWEDGNEYPLVRIDVSSKSHPFYTGKQNIVDTAGRVDRFRRKYGKKN.

Belongs to the bacterial ribosomal protein bL31 family. Type B subfamily. Part of the 50S ribosomal subunit.

The chain is Large ribosomal subunit protein bL31B from Dichelobacter nodosus (strain VCS1703A).